The sequence spans 406 residues: Cysteine desulfurase (406 aa).

Residue Lys226 is modified to N6-(pyridoxal phosphate)lysine. Cys364 functions as the Cysteine persulfide intermediate in the catalytic mechanism.

Belongs to the class-V pyridoxal-phosphate-dependent aminotransferase family. Csd subfamily. In terms of assembly, homodimer. Interacts with SufE and the SufBCD complex composed of SufB, SufC and SufD. The interaction with SufE is required to mediate the direct transfer of the sulfur atom from the S-sulfanylcysteine. Pyridoxal 5'-phosphate serves as cofactor.

It localises to the cytoplasm. The enzyme catalyses (sulfur carrier)-H + L-cysteine = (sulfur carrier)-SH + L-alanine. It carries out the reaction L-selenocysteine + AH2 = hydrogenselenide + L-alanine + A + H(+). It participates in cofactor biosynthesis; iron-sulfur cluster biosynthesis. Functionally, cysteine desulfurases mobilize the sulfur from L-cysteine to yield L-alanine, an essential step in sulfur metabolism for biosynthesis of a variety of sulfur-containing biomolecules. Component of the suf operon, which is activated and required under specific conditions such as oxidative stress and iron limitation. Acts as a potent selenocysteine lyase in vitro, that mobilizes selenium from L-selenocysteine. Selenocysteine lyase activity is however unsure in vivo. The polypeptide is Cysteine desulfurase (Salmonella agona (strain SL483)).